The sequence spans 143 residues: Large-conductance mechanosensitive channel (143 aa).

A run of 2 helical transmembrane segments spans residues 10–30 (FAVKGNVMDLAIGVIIGGAFS) and 89–109 (GSFITVLINFIILAFIIFLMV).

This sequence belongs to the MscL family. In terms of assembly, homopentamer.

The protein resides in the cell inner membrane. Channel that opens in response to stretch forces in the membrane lipid bilayer. May participate in the regulation of osmotic pressure changes within the cell. The polypeptide is Large-conductance mechanosensitive channel (Burkholderia pseudomallei (strain 668)).